The chain runs to 108 residues: UPF0060 membrane protein YnfA (108 aa).

The Periplasmic segment spans residues 1–5; that stretch reads MIKTT. Residues 6-26 traverse the membrane as a helical segment; the sequence is LLFFATALCEIIGCFLPWLWL. Over 27–30 the chain is Cytoplasmic; sequence KRNA. The helical transmembrane segment at 31 to 51 threads the bilayer; it reads SIWLLLPAGISLALFVWLLTL. Residues 52–60 are Periplasmic-facing; sequence HPAASGRVY. A helical transmembrane segment spans residues 61-81; the sequence is AAYGGVYVCTALMWLRVVDGV. The Cytoplasmic portion of the chain corresponds to 82 to 84; it reads KLT. A helical membrane pass occupies residues 85–105; sequence LYDWTGPLIALCGMLIIVVGW. The Periplasmic portion of the chain corresponds to 106–108; the sequence is GRT.

Belongs to the UPF0060 family.

It is found in the cell inner membrane. This chain is UPF0060 membrane protein YnfA, found in Escherichia coli O157:H7.